Consider the following 275-residue polypeptide: Dihydropteroate synthase (275 aa).

One can recognise a Pterin-binding domain in the interval 15-267 (PQIMGILNFT…DVAATSDMLK (253 aa)). Asn-22 is a Mg(2+) binding site. (7,8-dihydropterin-6-yl)methyl diphosphate-binding positions include Thr-62, Asp-96, Asn-115, Asp-185, Lys-221, and 255 to 257 (RVH).

The protein belongs to the DHPS family. As to quaternary structure, homodimer. Mg(2+) is required as a cofactor.

The catalysed reaction is (7,8-dihydropterin-6-yl)methyl diphosphate + 4-aminobenzoate = 7,8-dihydropteroate + diphosphate. It functions in the pathway cofactor biosynthesis; tetrahydrofolate biosynthesis; 7,8-dihydrofolate from 2-amino-4-hydroxy-6-hydroxymethyl-7,8-dihydropteridine diphosphate and 4-aminobenzoate: step 1/2. Catalyzes the condensation of para-aminobenzoate (pABA) with 6-hydroxymethyl-7,8-dihydropterin diphosphate (DHPt-PP) to form 7,8-dihydropteroate (H2Pte), the immediate precursor of folate derivatives. In Haemophilus influenzae (strain ATCC 51907 / DSM 11121 / KW20 / Rd), this protein is Dihydropteroate synthase (folP-A).